The primary structure comprises 643 residues: 3D-(3,5/4)-trihydroxycyclohexane-1,2-dione hydrolase (643 aa).

Glu-65 contacts thiamine diphosphate. The thiamine pyrophosphate binding stretch occupies residues 441–521 (SLPGDLQRMW…VNVLLFDNCG (81 aa)). Residues Asp-492 and Asn-519 each contribute to the Mg(2+) site.

It belongs to the TPP enzyme family. The cofactor is Mg(2+). It depends on thiamine diphosphate as a cofactor.

It catalyses the reaction 3D-3,5/4-trihydroxycyclohexane-1,2-dione + H2O = 5-deoxy-D-glucuronate + H(+). Its pathway is polyol metabolism; myo-inositol degradation into acetyl-CoA; acetyl-CoA from myo-inositol: step 3/7. Involved in the cleavage of the C1-C2 bond of 3D-(3,5/4)-trihydroxycyclohexane-1,2-dione (THcHDO) to yield 5-deoxy-glucuronate (5DG). The polypeptide is 3D-(3,5/4)-trihydroxycyclohexane-1,2-dione hydrolase (Clostridium botulinum (strain Eklund 17B / Type B)).